Reading from the N-terminus, the 791-residue chain is Splicing factor 3A subunit 1 (791 aa).

Residues 1–41 (MQAGPVQAVPPPPPVATESKQPIEEEASSKEDPTPSKPVVG) are disordered. A Glycyl lysine isopeptide (Lys-Gly) (interchain with G-Cter in SUMO2) cross-link involves residue lysine 20. Positions 21–34 (QPIEEEASSKEDPT) are enriched in basic and acidic residues. One copy of the SURP motif 1 repeat lies at 52–94 (IVDKTASFVARNGPEFEARIRQNEINNPKFNFLNPNDPYHAYY). Residue lysine 55 is modified to N6-acetyllysine. A Glycyl lysine isopeptide (Lys-Gly) (interchain with G-Cter in SUMO2) cross-link involves residue lysine 131. The stretch at 166–208 (VVKLTAQFVARNGRQFLTQLMQKEQRNYQFDFLRPQHSLFNYF) is one SURP motif 2 repeat. Residues 318–411 (GESEEVEMEV…APAPDEYLVS (94 aa)) form a disordered region. Phosphoserine is present on residues serine 320 and serine 329. The segment covering 320-336 (SEEVEMEVESDEEDQEK) has biased composition (acidic residues). The span at 340–351 (TPSQLDQDTQVQ) shows a compositional bias: polar residues. Residues 352-362 (DMDEGSDDEEE) show a composition bias toward acidic residues. Serine 357 is subject to Phosphoserine. Pro residues predominate over residues 366–382 (VPPPPETPMPPPLPPTP). The segment covering 386-395 (IVRKDYDPKA) has biased composition (basic and acidic residues). The residue at position 411 (serine 411) is a Phosphoserine. Lysine 422 participates in a covalent cross-link: Glycyl lysine isopeptide (Lys-Gly) (interchain with G-Cter in SUMO2). Serine 449 carries the post-translational modification Phosphoserine. A Phosphotyrosine modification is found at tyrosine 454. Positions 486 to 500 (IGEEEIQKPEEKVTW) are enriched in basic and acidic residues. 3 disordered regions span residues 486 to 516 (IGEEEIQKPEEKVTWDGHSGSMARTQQAAQA), 528 to 582 (HKAK…AMPP), and 664 to 684 (PMPPVHPPPPMEDEPPSKKLK). Lysine 497 participates in a covalent cross-link: Glycyl lysine isopeptide (Lys-Gly) (interchain with G-Cter in SUMO2). Serine 506 bears the Phosphoserine mark. The span at 507 to 516 (MARTQQAAQA) shows a compositional bias: polar residues. A Glycyl lysine isopeptide (Lys-Gly) (interchain with G-Cter in SUMO2) cross-link involves residue lysine 540. The span at 561-570 (ATNIPSSAPP) shows a compositional bias: polar residues. The span at 664 to 673 (PMPPVHPPPP) shows a compositional bias: pro residues. Residues 678 to 700 (PPSKKLKTEDSLMPEEEFLRRNK) are required and sufficient for nuclear import. Lysine 684 is covalently cross-linked (Glycyl lysine isopeptide (Lys-Gly) (interchain with G-Cter in SUMO2)). The Ubiquitin-like domain occupies 705–788 (IKVQVPNMQD…IHLALKERGG (84 aa)). Residue tyrosine 757 is modified to Phosphotyrosine.

Component of the 17S U2 SnRNP complex, a ribonucleoprotein complex that contains small nuclear RNA (snRNA) U2 and a number of specific proteins. Part of the SF3A subcomplex of the 17S U2 SnRNP complex which is composed of three subunits; SF3A3/SAP61, SF3A2/SAP62 and SF3A1/SAP114. SF3A associates with the splicing factor SF3B and a 12S RNA unit to form the mature 17S U2 small nuclear ribonucleoprotein complex (17S U2 snRNP). SF3A1 functions as a scaffold that interacts directly with both SF3A2 and SF3A3. Identified in the spliceosome 'E' complex, a precursor of the spliceosome 'A' complex. Identified in the spliceosome 'A' and 'B' complexes. Identified in the spliceosome 'C' complex. Interacts with P2RX6; resulting in a reduction of the splicing activity.

The protein localises to the nucleus. The protein resides in the nucleus speckle. Its function is as follows. Component of the 17S U2 SnRNP complex of the spliceosome, a large ribonucleoprotein complex that removes introns from transcribed pre-mRNAs. The 17S U2 SnRNP complex (1) directly participates in early spliceosome assembly and (2) mediates recognition of the intron branch site during pre-mRNA splicing by promoting the selection of the pre-mRNA branch-site adenosine, the nucleophile for the first step of splicing. Within the 17S U2 SnRNP complex, SF3A1 is part of the SF3A subcomplex that contributes to the assembly of the 17S U2 snRNP, and the subsequent assembly of the pre-spliceosome 'E' complex and the pre-catalytic spliceosome 'A' complex. Involved in pre-mRNA splicing as a component of pre-catalytic spliceosome 'B' complexes. The polypeptide is Splicing factor 3A subunit 1 (Sf3a1) (Mus musculus (Mouse)).